The primary structure comprises 103 residues: Small ribosomal subunit protein bS20 (103 aa).

The span at 1–20 shows a compositional bias: basic residues; it reads MATAKPKKKNPRLASGRKRV. Residues 1-31 are disordered; that stretch reads MATAKPKKKNPRLASGRKRVRQDTKLNAANT.

It belongs to the bacterial ribosomal protein bS20 family.

Its function is as follows. Binds directly to 16S ribosomal RNA. This is Small ribosomal subunit protein bS20 from Polaromonas sp. (strain JS666 / ATCC BAA-500).